We begin with the raw amino-acid sequence, 279 residues long: Putative phosphoenolpyruvate synthase regulatory protein (279 aa).

159–166 (GVSRSGKT) lines the ADP pocket.

It belongs to the pyruvate, phosphate/water dikinase regulatory protein family. PSRP subfamily.

It catalyses the reaction [pyruvate, water dikinase] + ADP = [pyruvate, water dikinase]-phosphate + AMP + H(+). The catalysed reaction is [pyruvate, water dikinase]-phosphate + phosphate + H(+) = [pyruvate, water dikinase] + diphosphate. Bifunctional serine/threonine kinase and phosphorylase involved in the regulation of the phosphoenolpyruvate synthase (PEPS) by catalyzing its phosphorylation/dephosphorylation. In Ralstonia nicotianae (strain ATCC BAA-1114 / GMI1000) (Ralstonia solanacearum), this protein is Putative phosphoenolpyruvate synthase regulatory protein.